Reading from the N-terminus, the 258-residue chain is Thiazole synthase (258 aa).

Lys100 serves as the catalytic Schiff-base intermediate with DXP. 1-deoxy-D-xylulose 5-phosphate is bound by residues Gly161, 187 to 188 (AG), and 209 to 210 (NT).

The protein belongs to the ThiG family. Homotetramer. Forms heterodimers with either ThiH or ThiS.

It localises to the cytoplasm. The enzyme catalyses [ThiS sulfur-carrier protein]-C-terminal-Gly-aminoethanethioate + 2-iminoacetate + 1-deoxy-D-xylulose 5-phosphate = [ThiS sulfur-carrier protein]-C-terminal Gly-Gly + 2-[(2R,5Z)-2-carboxy-4-methylthiazol-5(2H)-ylidene]ethyl phosphate + 2 H2O + H(+). It participates in cofactor biosynthesis; thiamine diphosphate biosynthesis. Functionally, catalyzes the rearrangement of 1-deoxy-D-xylulose 5-phosphate (DXP) to produce the thiazole phosphate moiety of thiamine. Sulfur is provided by the thiocarboxylate moiety of the carrier protein ThiS. In vitro, sulfur can be provided by H(2)S. This Campylobacter jejuni subsp. jejuni serotype O:6 (strain 81116 / NCTC 11828) protein is Thiazole synthase.